The following is a 446-amino-acid chain: Chromosomal replication initiator protein DnaA (446 aa).

The domain I, interacts with DnaA modulators stretch occupies residues 1-81; that stretch reads MENIADLWNS…AKLNIRFIIP (81 aa). Residues 81 to 109 form a domain II region; sequence PQSQTEEEVDYPPAKAKKMNDESNHLPQS. Positions 110-326 are domain III, AAA+ region; it reads MLNPKYTFDT…GALIRVVAYS (217 aa). The ATP site is built by glycine 154, glycine 156, lysine 157, and threonine 158. The tract at residues 327–446 is domain IV, binds dsDNA; sequence SLINKDINAD…QIEEINDILK (120 aa).

It belongs to the DnaA family. In terms of assembly, oligomerizes as a right-handed, spiral filament on DNA at oriC.

The protein localises to the cytoplasm. Plays an essential role in the initiation and regulation of chromosomal replication. ATP-DnaA binds to the origin of replication (oriC) to initiate formation of the DNA replication initiation complex once per cell cycle. Binds the DnaA box (a 9 base pair repeat at the origin) and separates the double-stranded (ds)DNA. Forms a right-handed helical filament on oriC DNA; dsDNA binds to the exterior of the filament while single-stranded (ss)DNA is stabiized in the filament's interior. The ATP-DnaA-oriC complex binds and stabilizes one strand of the AT-rich DNA unwinding element (DUE), permitting loading of DNA polymerase. After initiation quickly degrades to an ADP-DnaA complex that is not apt for DNA replication. Binds acidic phospholipids. This Bacillus cytotoxicus (strain DSM 22905 / CIP 110041 / 391-98 / NVH 391-98) protein is Chromosomal replication initiator protein DnaA.